Reading from the N-terminus, the 379-residue chain is DnaJ homolog subfamily B member 14 (379 aa).

The Cytoplasmic segment spans residues 1 to 244; that stretch reads MEGNRDEAEK…GHEREEERGD (244 aa). Positions 55 to 94 are disordered; it reads STAGNSPHCRKPSGSGDQSKPNCTKDSTSGSGEGGKGYTK. Polar residues predominate over residues 69 to 84; sequence SGDQSKPNCTKDSTSG. The J domain occupies 108 to 172; the sequence is NYYEVLGVTK…EKRKQYDLTG (65 aa). The tract at residues 219 to 241 is disordered; sequence SNGRAGYSQQHQHRHSGHEREEE. A helical transmembrane segment spans residues 245–265; it reads GGFSVFIQLMPIIVLILVSLL. Over 266–379 the chain is Lumenal; sequence SQLMVSNPPY…ERLTSLYKGG (114 aa).

It belongs to the DnaJ family. DNAJB12/DNAJB14 subfamily. In terms of assembly, interacts (via J domain) with HSPA8/Hsc70. Forms a multiprotein complex, at least composed of DNAJB12, DNAJB14, HSPA8/Hsc70 and SGTA; interaction with DNAJB14 and HSPA8/Hsc70 is direct.

The protein localises to the endoplasmic reticulum membrane. Its subcellular location is the nucleus membrane. Its function is as follows. Acts as a co-chaperone with HSPA8/Hsc70; required to promote protein folding and trafficking, prevent aggregation of client proteins, and promote unfolded proteins to endoplasmic reticulum-associated degradation (ERAD) pathway. Acts by determining HSPA8/Hsc70's ATPase and polypeptide-binding activities. Can also act independently of HSPA8/Hsc70: together with DNAJB12, acts as a chaperone that promotes maturation of potassium channels KCND2 and KCNH2 by stabilizing nascent channel subunits and assembling them into tetramers. While stabilization of nascent channel proteins is dependent on HSPA8/Hsc70, the process of oligomerization of channel subunits is independent of HSPA8/Hsc70. When overexpressed, forms membranous structures together with DNAJB12 and HSPA8/Hsc70 within the nucleus; the role of these structures, named DJANGOs, is still unclear. In terms of biological role, (Microbial infection) In case of infection by polyomavirus, involved in the virus endoplasmic reticulum membrane penetration and infection. This is DnaJ homolog subfamily B member 14 from Homo sapiens (Human).